We begin with the raw amino-acid sequence, 1312 residues long: MASIFLNKKTIETNNFIFNDNRPKNIKIVDKIKSSTVEFFHSIQKHIQQVKVENNNNNNNNNNNSENNKYKRSQSEENINNYIQNHFNPPQPQKKRNILFIFQNLINSGNSNNNNSSNSSCNSTPSTSPSSTPRSTNSPRSTYSPRNNNNNFTESSSDNQQFDITFNMVVEKERVILTVKVPEVGLTKKILFDKVETIKDAILLVIEKLPPGCLDASEYNLFLPQKNQWCKIDSRFSKYQFKENQEIEFKKDSRGGVSHMLSNVGNLLTRPYRTIYIKLPEIVTVGTLPPLQINGQIGDLPSLNNSLNNSLNNISSSSSGGTGGGSGTTAAATGSSLSNSNSNSNLQNSQSANNSPIIHRRRTSSFSYDPNIHHSSLTHSNSNSNLISTNTSSIGNSAPSPTTLGSKPFSIPKLNLTENNLNNSSSTSSSPRNNGNEVIQSSSSTSSPRVNAPPPLEHKKSFLNIIGISPRGTNRERSSSTNSLNNSTSSLKSSNNNILQQQQQQQQHYDSAPTTPRNFGTFVRTQQLQNQQQQLQQQESIEAFDFEDDSTLGEVLNKICTRYQYIEKDLLEDYSLITKDGLWFVDRNKTITELGLKHMDEVEFKRMTQKVKVVFLNKEIVLNFNPSDTLKEINYKIIVHYLPSLIKLSRSNSILSSSSSSIFLNHQSSSSSNSSSSPSQSYRSSLSLEPLVISDLENSQILSNTPTITTVGNHQILNLQQQQNKQRSYSDASPLSFSKDYTSEISNHQQQNIENHINRRKNSISTNPLTNSGNIANNNNNNNNNKDKDDNNNNNNNNNNNNNNNNNNNNNNNNNNIASSTDTIQSNSSTGSLGSNNNIAFSIQQNRYPIPDNLVEFKDFKLHLSGTKNQNPNINQKFDMLLDERRTLSSFNFWNNIKLHFKNSSKSLHSDSKRVAPTLPFYLQIESVEQFSVSHILELEGTLLISDILKSFNRLLLNNENIKINDPLDEYGLFFNTVNNGNREGLSYGSSIYLDPYKTLSHYPMIEPLDKLMFKRTNTIFGVDPNTIVSKIDPITGFNIPCLLLDLKQKFIELDGFSIEGIFKTNNYYDLTFTEIIKEIENGTLLTSNNPNVDAIGIACFIKRWFSKLPKKICSLLDDETLLYASTQESTAEASLDSIPQPYRSLLLWLVRFLSEVSQSAYTNKCSAKILAIVIAPNLISISPNNNNNNKENNDHHHHHHHHHNSHHHRDNNNNNSNNNSSTTPTSSSVGKYTSLEKLHQCTLFLRNLIKLKLRENGFLPISTSSISISNSHNSSSFISMTGTSETSIHSSNSPISSSISRSPSLTDIVEE.

6 disordered regions span residues 52-74, 111-158, 314-519, 762-831, 1185-1230, and 1282-1312; these read VENN…KRSQ, SNNN…SSSD, ISSS…PRNF, NSIS…SSTG, NNNN…SSSV, and TGTS…IVEE. Low complexity-rich tracts occupy residues 53–67 and 111–146; these read ENNN…NSEN and SNNN…YSPR. A compositionally biased stretch (polar residues) spans 147 to 158; it reads NNNNNFTESSSD. Composition is skewed to low complexity over residues 328-355, 373-397, and 414-436; these read TTAA…ANNS, HHSS…IGNS, and LNLT…NNGN. The segment covering 437–449 has biased composition (polar residues); sequence EVIQSSSSTSSPR. Residues 479–507 are compositionally biased toward low complexity; that stretch reads SSTNSLNNSTSSLKSSNNNILQQQQQQQQ. Polar residues-rich tracts occupy residues 508–518 and 763–776; these read HYDSAPTTPRN and SIST…GNIA. Over residues 792–816 the composition is skewed to low complexity; that stretch reads NNNNNNNNNNNNNNNNNNNNNNNNN. The 183-residue stretch at 1030–1212 folds into the Rho-GAP domain; sequence SKIDPITGFN…HHNSHHHRDN (183 aa). Over residues 1196 to 1210 the composition is skewed to basic residues; that stretch reads HHHHHHHHHNSHHHR. 2 stretches are compositionally biased toward low complexity: residues 1213–1222 and 1282–1305; these read NNNNSNNNSS and TGTS…RSPS.

It is found in the cytoplasm. Its function is as follows. Rho GTPase-activating protein involved in the signal transduction pathway. The polypeptide is Rho GTPase-activating protein gacG (gacG) (Dictyostelium discoideum (Social amoeba)).